We begin with the raw amino-acid sequence, 428 residues long: Serine--tRNA ligase (428 aa).

234-236 (TAE) lines the L-serine pocket. 265–267 (RRE) provides a ligand contact to ATP. An L-serine-binding site is contributed by Glu-288. ATP is bound at residue 352–355 (EISS). L-serine is bound at residue Ser-388.

The protein belongs to the class-II aminoacyl-tRNA synthetase family. Type-1 seryl-tRNA synthetase subfamily. As to quaternary structure, homodimer. The tRNA molecule binds across the dimer.

It localises to the cytoplasm. The catalysed reaction is tRNA(Ser) + L-serine + ATP = L-seryl-tRNA(Ser) + AMP + diphosphate + H(+). It catalyses the reaction tRNA(Sec) + L-serine + ATP = L-seryl-tRNA(Sec) + AMP + diphosphate + H(+). It participates in aminoacyl-tRNA biosynthesis; selenocysteinyl-tRNA(Sec) biosynthesis; L-seryl-tRNA(Sec) from L-serine and tRNA(Sec): step 1/1. Catalyzes the attachment of serine to tRNA(Ser). Is also able to aminoacylate tRNA(Sec) with serine, to form the misacylated tRNA L-seryl-tRNA(Sec), which will be further converted into selenocysteinyl-tRNA(Sec). This chain is Serine--tRNA ligase, found in Synechococcus elongatus (strain ATCC 33912 / PCC 7942 / FACHB-805) (Anacystis nidulans R2).